The following is a 322-amino-acid chain: Putative DNA-directed RNA polymerase subunit alpha-like 2 (322 aa).

The segment at 1–232 (MSNPNNGAEW…GLLSLVFQAE (232 aa)) is alpha N-terminal domain (alpha-NTD). An alpha C-terminal domain (alpha-CTD) region spans residues 280–322 (EGPVTDEEGDSIDPTFTPVQKWDITMNSYQYSGETFQGLLSRF).

It belongs to the RNA polymerase alpha chain family. In plastids the minimal PEP RNA polymerase catalytic core is composed of four subunits: alpha, beta, beta', and beta''. When a (nuclear-encoded) sigma factor is associated with the core the holoenzyme is formed, which can initiate transcription.

The protein localises to the plastid. It is found in the chloroplast. The enzyme catalyses RNA(n) + a ribonucleoside 5'-triphosphate = RNA(n+1) + diphosphate. Functionally, DNA-dependent RNA polymerase catalyzes the transcription of DNA into RNA using the four ribonucleoside triphosphates as substrates. The chain is Putative DNA-directed RNA polymerase subunit alpha-like 2 (rpoAL2-A) from Pelargonium hortorum (Common geranium).